The chain runs to 303 residues: Olfactory receptor 4X2 (303 aa).

Residues 1-17 (MTEFIFLVLSPNQEVQR) are Extracellular-facing. A helical membrane pass occupies residues 18-41 (VCFVIFLFLYTAIVLGNFLIVLTV). The Cytoplasmic portion of the chain corresponds to 42–49 (MTSRSLGS). Residues 50 to 71 (PMYFFLSYLSFMEICYSSATAP) traverse the membrane as a helical segment. At 72–92 (KLISDLLAERKVISWWGCMAQ) the chain is on the extracellular side. Cysteines 89 and 181 form a disulfide. The helical transmembrane segment at 93-112 (LFFLHFFGGTEIFLLTVMAY) threads the bilayer. The Cytoplasmic segment spans residues 113–131 (DHYVAICKPLSYTTIMNWQ). The helical transmembrane segment at 132–150 (VCTVLVGIAWVGGFMHSFA) threads the bilayer. Residues 151 to 187 (QILLIFHLLFCGPNVINHYFCDLVPLLKLACSDTFLI) are Extracellular-facing. Residues 188–211 (GLLIVANGGTLSVISFGVLLASYM) traverse the membrane as a helical segment. Residues 212–227 (VILLHLRTWSSEGWCK) lie on the Cytoplasmic side of the membrane. The helical transmembrane segment at 228–250 (ALSTCGSHFAVVILFFGPCVFNS) threads the bilayer. The Extracellular segment spans residues 251–261 (LRPSTTLPIDK). A helical membrane pass occupies residues 262-281 (MVAVFYTVITAILNPVIYSL). The Cytoplasmic portion of the chain corresponds to 282-303 (RNAEMRKAMKRLWIRTLRLNEK).

It belongs to the G-protein coupled receptor 1 family.

It localises to the cell membrane. Its function is as follows. Odorant receptor. This is Olfactory receptor 4X2 (OR4X2) from Homo sapiens (Human).